We begin with the raw amino-acid sequence, 1169 residues long: Pesticidal crystal protein Cry8Ba (1169 aa).

A disordered region spans residues 1–26 (MSPNNQNEYEIIDATPSTSVSNDSNR). Polar residues predominate over residues 15 to 25 (TPSTSVSNDSN).

The protein belongs to the delta endotoxin family.

Functionally, promotes colloidosmotic lysis by binding to the midgut epithelial cells of insects. Active on various scarabaeid beetles. The chain is Pesticidal crystal protein Cry8Ba (cry8Ba) from Bacillus thuringiensis serovar kumamotoensis.